The primary structure comprises 610 residues: All-trans-retinol 13,14-reductase (610 aa).

The first 18 residues, 1–18, serve as a signal peptide directing secretion; the sequence is MWLPLVLFLAVLLLAVVC.

It belongs to the carotenoid/retinoid oxidoreductase family. CrtISO subfamily. The cofactor is NAD(+). Requires NADP(+) as cofactor. FAD is required as a cofactor.

The protein resides in the endoplasmic reticulum membrane. It carries out the reaction all-trans-13,14-dihydroretinol + A = all-trans-retinol + AH2. Functionally, catalyzes the saturation of all-trans-retinol to all-trans-13,14-dihydroretinol. Does not exhibit any activity toward all-trans-retinoic acid, nor 9-cis, 11-cis or 13-cis-retinol isomers. May play a role in the metabolism of vitamin A. Independently of retinol conversion, may regulate liver metabolism upstream of MLXIPL/ChREBP. May play a role in adipocyte differentiation. This is All-trans-retinol 13,14-reductase (RETSAT) from Macaca fascicularis (Crab-eating macaque).